Reading from the N-terminus, the 144-residue chain is Nucleoside diphosphate kinase (144 aa).

ATP is bound by residues Lys-11, Phe-59, Arg-87, Thr-93, Arg-104, and Asn-114. Residue His-117 is the Pros-phosphohistidine intermediate of the active site.

This sequence belongs to the NDK family. In terms of assembly, homotetramer. Mg(2+) is required as a cofactor.

The protein localises to the cytoplasm. It carries out the reaction a 2'-deoxyribonucleoside 5'-diphosphate + ATP = a 2'-deoxyribonucleoside 5'-triphosphate + ADP. It catalyses the reaction a ribonucleoside 5'-diphosphate + ATP = a ribonucleoside 5'-triphosphate + ADP. In terms of biological role, major role in the synthesis of nucleoside triphosphates other than ATP. The ATP gamma phosphate is transferred to the NDP beta phosphate via a ping-pong mechanism, using a phosphorylated active-site intermediate. This Aliivibrio fischeri (strain MJ11) (Vibrio fischeri) protein is Nucleoside diphosphate kinase.